The following is a 235-amino-acid chain: 1-(5-phosphoribosyl)-5-[(5-phosphoribosylamino)methylideneamino] imidazole-4-carboxamide isomerase (235 aa).

D8 functions as the Proton acceptor in the catalytic mechanism. Catalysis depends on D128, which acts as the Proton donor.

Belongs to the HisA/HisF family.

The protein localises to the cytoplasm. It catalyses the reaction 1-(5-phospho-beta-D-ribosyl)-5-[(5-phospho-beta-D-ribosylamino)methylideneamino]imidazole-4-carboxamide = 5-[(5-phospho-1-deoxy-D-ribulos-1-ylimino)methylamino]-1-(5-phospho-beta-D-ribosyl)imidazole-4-carboxamide. Its pathway is amino-acid biosynthesis; L-histidine biosynthesis; L-histidine from 5-phospho-alpha-D-ribose 1-diphosphate: step 4/9. This Thermus thermophilus (strain ATCC BAA-163 / DSM 7039 / HB27) protein is 1-(5-phosphoribosyl)-5-[(5-phosphoribosylamino)methylideneamino] imidazole-4-carboxamide isomerase.